Reading from the N-terminus, the 347-residue chain is Fructose-1,6-bisphosphatase class 1 (347 aa).

Residues Glu107, Asp128, Leu130, and Asp131 each contribute to the Mg(2+) site. Substrate contacts are provided by residues 131-134 (DGSS), Asn224, Tyr257, and Lys286. Position 292 (Glu292) interacts with Mg(2+).

It belongs to the FBPase class 1 family. As to quaternary structure, homotetramer. Mg(2+) is required as a cofactor.

The protein resides in the cytoplasm. The enzyme catalyses beta-D-fructose 1,6-bisphosphate + H2O = beta-D-fructose 6-phosphate + phosphate. The protein operates within carbohydrate biosynthesis; gluconeogenesis. The protein is Fructose-1,6-bisphosphatase class 1 of Sorangium cellulosum (strain So ce56) (Polyangium cellulosum (strain So ce56)).